A 1349-amino-acid polypeptide reads, in one-letter code: ABC multidrug transporter mdr1 (1349 aa).

The disordered stretch occupies residues 1–62; it reads MPAPETGASS…PDGKQKDHGK (62 aa). The segment covering 35–45 has biased composition (basic and acidic residues); that stretch reads DNEKPHDHHSL. A run of 4 helical transmembrane segments spans residues 108–128, 162–182, 234–254, and 257–277; these read ILII…LPLF, YFVY…VGFI, KVGL…VAYV, and WKLA…MGGG. An ABC transmembrane type-1 1 domain is found at 112–402; it reads LVSAICAIAA…VAPNGQAFTN (291 aa). N-linked (GlcNAc...) asparagine glycosylation is present at Asn-308. 2 helical membrane passes run 339–359 and 371–391; these read ILGM…GLGF and VNVG…FSLG. An ABC transporter 1 domain is found at 437-682; the sequence is IEFRNVKHIY…KGTYYKLVEA (246 aa). 472 to 479 is an ATP binding site; it reads GPSGSGKS. 2 helical membrane-spanning segments follow: residues 779 to 799 and 828 to 848; these read MLIG…QAFL and FFVV…AFAI. Residues 780–1069 enclose the ABC transmembrane type-1 2 domain; that stretch reads LIGLTFSFLA…VFSFAPDMGK (290 aa). Asn-878 and Asn-893 each carry an N-linked (GlcNAc...) asparagine glycan. Helical transmembrane passes span 896–916, 926–948, 1016–1036, and 1043–1063; these read GVSG…GAAM, LALV…FYML, ALVF…LGHH, and FFVC…VFSF. One can recognise an ABC transporter 2 domain in the interval 1104–1342; it reads IEFRDVHFRY…KGRYYELVNL (239 aa). The N-linked (GlcNAc...) asparagine glycan is linked to Asn-1126. Residue 1139 to 1146 participates in ATP binding; the sequence is GPSGCGKS.

The protein belongs to the ABC transporter superfamily. ABCB family. Multidrug resistance exporter (TC 3.A.1.201) subfamily.

Its subcellular location is the cell membrane. The enzyme catalyses voriconazole(in) + ATP + H2O = voriconazole(out) + ADP + phosphate + H(+). Functionally, pleiotropic ABC efflux transporter that may be involved in A.fumigatus adaptation to azoles such as vorizonazole. This Aspergillus fumigatus (strain ATCC MYA-4609 / CBS 101355 / FGSC A1100 / Af293) (Neosartorya fumigata) protein is ABC multidrug transporter mdr1.